The sequence spans 106 residues: GQPKAAPSVTLFPPSSEELQANKATLVCLISDFYPGAVTVAWKADSSPVKAGVETTTPSKQSNNKYAASSYLSLTPEQWKSHRSYSCQVTHEGSTVEKTVAPTECS.

The Ig-like domain maps to 7-101 (PSVTLFPPSS…EGSTVEKTVA (95 aa)). Cysteine 28 and cysteine 87 are oxidised to a cystine.

Immunoglobulins are composed of two identical heavy chains and two identical light chains; disulfide-linked.

It localises to the secreted. Its subcellular location is the cell membrane. Constant region of immunoglobulin light chains. Immunoglobulins, also known as antibodies, are membrane-bound or secreted glycoproteins produced by B lymphocytes. In the recognition phase of humoral immunity, the membrane-bound immunoglobulins serve as receptors which, upon binding of a specific antigen, trigger the clonal expansion and differentiation of B lymphocytes into immunoglobulins-secreting plasma cells. Secreted immunoglobulins mediate the effector phase of humoral immunity, which results in the elimination of bound antigens. The antigen binding site is formed by the variable domain of one heavy chain, together with that of its associated light chain. Thus, each immunoglobulin has two antigen binding sites with remarkable affinity for a particular antigen. The variable domains are assembled by a process called V-(D)-J rearrangement and can then be subjected to somatic hypermutations which, after exposure to antigen and selection, allow affinity maturation for a particular antigen. The protein is Immunoglobulin lambda constant 2 of Homo sapiens (Human).